We begin with the raw amino-acid sequence, 336 residues long: DNA-directed RNA polymerase subunit alpha (336 aa).

The tract at residues 1–232 (MIQKNWQELI…DQLSVFVNFD (232 aa)) is alpha N-terminal domain (alpha-NTD). The segment at 248–336 (FNPALLKKVD…DLAKRYEDQY (89 aa)) is alpha C-terminal domain (alpha-CTD).

The protein belongs to the RNA polymerase alpha chain family. Homodimer. The RNAP catalytic core consists of 2 alpha, 1 beta, 1 beta' and 1 omega subunit. When a sigma factor is associated with the core the holoenzyme is formed, which can initiate transcription.

The enzyme catalyses RNA(n) + a ribonucleoside 5'-triphosphate = RNA(n+1) + diphosphate. Its function is as follows. DNA-dependent RNA polymerase catalyzes the transcription of DNA into RNA using the four ribonucleoside triphosphates as substrates. This is DNA-directed RNA polymerase subunit alpha from Sinorhizobium medicae (strain WSM419) (Ensifer medicae).